Here is a 491-residue protein sequence, read N- to C-terminus: COP9 signalosome complex subunit 1 (491 aa).

The region spanning 269 to 431 is the PCI domain; sequence CLLLASFDHC…KILYARDVDQ (163 aa). Positions 465 to 491 are disordered; the sequence is HVKSPPREGSQGELTPANSQSRMSTNM. A phosphoserine mark is found at Ser468 and Ser474. A compositionally biased stretch (polar residues) spans 476 to 491; that stretch reads GELTPANSQSRMSTNM. Position 479 is a phosphothreonine (Thr479). At Ser483 the chain carries Phosphoserine.

The protein belongs to the CSN1 family. In terms of assembly, component of the CSN complex, composed of COPS1/GPS1, COPS2, COPS3, COPS4, COPS5, COPS6, COPS7 (COPS7A or COPS7B), COPS8 and COPS9 isoform 1. In the complex, it probably interacts directly with COPS2, COPS3, COPS4 and COPS5. Interacts directly with inositol kinase ITPK1. Interacts with CAPN8. Interacts with USP48. Interacts with ASB4; this interaction negatively regulates GPS1. As to expression, widely expressed.

The protein localises to the cytoplasm. It is found in the nucleus. Functionally, essential component of the COP9 signalosome complex (CSN), a complex involved in various cellular and developmental processes. The CSN complex is an essential regulator of the ubiquitin (Ubl) conjugation pathway by mediating the deneddylation of the cullin subunits of SCF-type E3 ligase complexes, leading to decrease the Ubl ligase activity of SCF-type complexes such as SCF, CSA or DDB2. The complex is also involved in phosphorylation of p53/TP53, c-jun/JUN, IkappaBalpha/NFKBIA, ITPK1 and IRF8/ICSBP, possibly via its association with CK2 and PKD kinases. CSN-dependent phosphorylation of TP53 and JUN promotes and protects degradation by the Ubl system, respectively. Suppresses G-protein- and mitogen-activated protein kinase-mediated signal transduction. In Homo sapiens (Human), this protein is COP9 signalosome complex subunit 1 (GPS1).